Reading from the N-terminus, the 251-residue chain is Ubiquinone/menaquinone biosynthesis C-methyltransferase UbiE (251 aa).

S-adenosyl-L-methionine-binding positions include Thr-74, Asp-95, 123 to 124, and Ser-140; that span reads NA.

It belongs to the class I-like SAM-binding methyltransferase superfamily. MenG/UbiE family.

It catalyses the reaction a 2-demethylmenaquinol + S-adenosyl-L-methionine = a menaquinol + S-adenosyl-L-homocysteine + H(+). The catalysed reaction is a 2-methoxy-6-(all-trans-polyprenyl)benzene-1,4-diol + S-adenosyl-L-methionine = a 5-methoxy-2-methyl-3-(all-trans-polyprenyl)benzene-1,4-diol + S-adenosyl-L-homocysteine + H(+). Its pathway is quinol/quinone metabolism; menaquinone biosynthesis; menaquinol from 1,4-dihydroxy-2-naphthoate: step 2/2. It participates in cofactor biosynthesis; ubiquinone biosynthesis. Functionally, methyltransferase required for the conversion of demethylmenaquinol (DMKH2) to menaquinol (MKH2) and the conversion of 2-polyprenyl-6-methoxy-1,4-benzoquinol (DDMQH2) to 2-polyprenyl-3-methyl-6-methoxy-1,4-benzoquinol (DMQH2). In Proteus mirabilis (strain HI4320), this protein is Ubiquinone/menaquinone biosynthesis C-methyltransferase UbiE.